The following is a 229-amino-acid chain: Potassium/proton antiporter CemA (229 aa).

4 helical membrane-spanning segments follow: residues 7-27 (FTPL…SFSF), 114-134 (IISF…LVVL), 154-174 (ILLL…ELMI), and 189-209 (IISG…KYWI).

It belongs to the CemA family.

It is found in the plastid. It localises to the chloroplast inner membrane. It carries out the reaction K(+)(in) + H(+)(out) = K(+)(out) + H(+)(in). Its function is as follows. Contributes to K(+)/H(+) antiport activity by supporting proton efflux to control proton extrusion and homeostasis in chloroplasts in a light-dependent manner to modulate photosynthesis. Prevents excessive induction of non-photochemical quenching (NPQ) under continuous-light conditions. Indirectly promotes efficient inorganic carbon uptake into chloroplasts. The polypeptide is Potassium/proton antiporter CemA (Nandina domestica (Heavenly bamboo)).